The following is a 434-amino-acid chain: Serine hydroxymethyltransferase (434 aa).

Residue 120 to 122 (GHI) participates in (6S)-5,6,7,8-tetrahydrofolate binding. Position 236 is an N6-(pyridoxal phosphate)lysine (Lys236). Glu255 provides a ligand contact to (6S)-5,6,7,8-tetrahydrofolate.

It belongs to the SHMT family. Homodimer. Pyridoxal 5'-phosphate is required as a cofactor.

It is found in the cytoplasm. Its pathway is amino-acid biosynthesis; glycine biosynthesis; glycine from L-serine: step 1/1. Catalyzes the reversible interconversion of serine and glycine with a modified folate serving as the one-carbon carrier. Also exhibits a pteridine-independent aldolase activity toward beta-hydroxyamino acids, producing glycine and aldehydes, via a retro-aldol mechanism. This Korarchaeum cryptofilum (strain OPF8) protein is Serine hydroxymethyltransferase.